The following is a 426-amino-acid chain: Tyrosine-protein phosphatase non-receptor type 20 (426 aa).

Positions 1 to 10 are enriched in basic residues; the sequence is MSSPRKVRGK. The segment at 1–58 is disordered; that stretch reads MSSPRKVRGKTGRDNDEEEGNSGNLNLRNSLPSSSQKMTPTKPIFGNKMNSENVKPSH. Low complexity predominate over residues 21 to 35; it reads NSGNLNLRNSLPSSS. Position 76 is a phosphoserine (Ser-76). Over residues 95-117 the composition is skewed to polar residues; it reads NSMDSETAGPSKTVSPVLSGSSR. The disordered stretch occupies residues 95–124; that stretch reads NSMDSETAGPSKTVSPVLSGSSRLSKDTET. Position 127 is a phosphoserine (Ser-127). One can recognise a Tyrosine-protein phosphatase domain in the interval 165–418; that stretch reads IIREFLELEQ…QFCYEIVLEV (254 aa). Residues Asp-329, 359–365, and Gln-403 each bind substrate; that span reads CSAGVGR. Cys-359 acts as the Phosphocysteine intermediate in catalysis.

This sequence belongs to the protein-tyrosine phosphatase family. Non-receptor class subfamily. Testis-specific. Specifically expressed in testicular germ cells that undergo meiosis (at protein level).

It is found in the nucleus. Its subcellular location is the cytoplasm. The protein resides in the cytoskeleton. The protein localises to the microtubule organizing center. It localises to the centrosome. The catalysed reaction is O-phospho-L-tyrosyl-[protein] + H2O = L-tyrosyl-[protein] + phosphate. Tyrosine-protein phosphatase targeted to sites of actin polymerization in response of varied extracellular stimuli. Has tyrosine phosphatase activity towards various tyrosyl phosphorylated substrates. The chain is Tyrosine-protein phosphatase non-receptor type 20 (Ptpn20) from Mus musculus (Mouse).